A 105-amino-acid chain; its full sequence is UPF0166 protein aq_450 (105 aa).

This sequence belongs to the UPF0166 family.

The sequence is that of UPF0166 protein aq_450 from Aquifex aeolicus (strain VF5).